Here is a 550-residue protein sequence, read N- to C-terminus: MWASWIPVLCLGVCLLLPPEPVGSEGAVPIPITCSTRGLDIRKEKADVLCPGGCPLEEFSVFGHIVYASVSSICGAAVHRGVIGHSGGPVRIYSLPGRENYSSVVANGIQSQMLSRWSASFTVTKGKSGTQEATGQAVSTAHPATGKRLKKTPEKKTGNKDCKADIAFLIDGSFNIGQRRFNLQKNFVGKVALMLGIGTEGPHVGLVQASEHPKIEFYLKNFTSAKDVLFAIKEVAFRGGNSNTGKALKHTAQKFFTADTGARKGIPKVVVVFIDGWPSDDIEEAGIVAREFGVNVFIVSVAKPIPEELGMVQDVAFVDKAVCRNNGFFSYHMPNWFGTTKYVKPLVQKLCTHEQMMCSKTCYNSVNIAFLIDGSSSVGESNFRLMLKFVSNIAKTFEISDIGAKIAAVQFTYDQRTEFSFTDYSTKENVLAVIRNISYMSGGTATGDAISFTVRNVFGPVRDSPNKNFLVIVTDGQSYDDVRGPAAAAHDAGITIFSVGVAWAPLDDLKDMASKPKESHAFFTREFTGLEPIVSDVIRGICRDFLESQQ.

Positions methionine 1 to serine 24 are cleaved as a signal peptide. One can recognise an LCCL domain in the interval valine 28–phenylalanine 121. Cystine bridges form between cysteine 34-cysteine 50 and cysteine 54-cysteine 74. N-linked (GlcNAc...) asparagine glycosylation is present at asparagine 100. Polar residues predominate over residues serine 128–serine 139. The interval serine 128 to glycine 158 is disordered. VWFA domains lie at aspartate 165 to leucine 350 and asparagine 367 to valine 537. N-linked (GlcNAc...) asparagine glycans are attached at residues asparagine 221 and asparagine 436.

Monomer. May form homodimer. Interacts with type II collagen. Interacts with SLC44A2. Interacts with ANXA2. Post-translationally, N-glycosylated.

The protein localises to the secreted. Its subcellular location is the extracellular space. In terms of biological role, plays a role in the control of cell shape and motility in the trabecular meshwork. The protein is Cochlin (COCH) of Bos taurus (Bovine).